Here is a 303-residue protein sequence, read N- to C-terminus: Mycothiol acetyltransferase (303 aa).

N-acetyltransferase domains follow at residues 10–156 (ALPG…LAVP) and 162–303 (LAVR…SGPR). 1D-myo-inositol 2-(L-cysteinylamino)-2-deoxy-alpha-D-glucopyranoside is bound at residue Glu-41. Acetyl-CoA is bound at residue 86–88 (LLV). Positions 189, 228, and 235 each coordinate 1D-myo-inositol 2-(L-cysteinylamino)-2-deoxy-alpha-D-glucopyranoside. Acetyl-CoA is bound by residues 239 to 241 (LGV) and 246 to 252 (SGAGLGR). A 1D-myo-inositol 2-(L-cysteinylamino)-2-deoxy-alpha-D-glucopyranoside-binding site is contributed by Tyr-272. An acetyl-CoA-binding site is contributed by 277-282 (NLRAVR).

This sequence belongs to the acetyltransferase family. MshD subfamily. As to quaternary structure, monomer.

The enzyme catalyses 1D-myo-inositol 2-(L-cysteinylamino)-2-deoxy-alpha-D-glucopyranoside + acetyl-CoA = mycothiol + CoA + H(+). In terms of biological role, catalyzes the transfer of acetyl from acetyl-CoA to desacetylmycothiol (Cys-GlcN-Ins) to form mycothiol. The polypeptide is Mycothiol acetyltransferase (Kineococcus radiotolerans (strain ATCC BAA-149 / DSM 14245 / SRS30216)).